The chain runs to 190 residues: Large ribosomal subunit protein bL25 (190 aa).

This sequence belongs to the bacterial ribosomal protein bL25 family. CTC subfamily. Part of the 50S ribosomal subunit; part of the 5S rRNA/L5/L18/L25 subcomplex. Contacts the 5S rRNA. Binds to the 5S rRNA independently of L5 and L18.

Its function is as follows. This is one of the proteins that binds to the 5S RNA in the ribosome where it forms part of the central protuberance. In Neisseria meningitidis serogroup C / serotype 2a (strain ATCC 700532 / DSM 15464 / FAM18), this protein is Large ribosomal subunit protein bL25.